The following is a 1498-amino-acid chain: ATP-binding cassette sub-family C member 6 (1498 aa).

The Extracellular portion of the chain corresponds to 1 to 37 (MNRGRSMATPGEQCAGLRVWNQTEQEPAAYHLLSLCF). Asparagine 21 carries N-linked (GlcNAc...) asparagine glycosylation. Residues 38–58 (VRAASSWVPPMYLWVLGPIYL) form a helical membrane-spanning segment. Residues 59-78 (LYIHRHGRCYLRMSHLFKTK) are Cytoplasmic-facing. The helical transmembrane segment at 79 to 99 (MVLGLALILLYTFNVAVPLWR) threads the bilayer. The Extracellular portion of the chain corresponds to 100 to 104 (IHQGV). A helical membrane pass occupies residues 105-125 (PQAPELLIHPTVWLTTMSFAT). At 126-137 (FLIHMERRKGVR) the chain is on the cytoplasmic side. The helical transmembrane segment at 138 to 155 (SSGVLFGYWLLCCILPGI) threads the bilayer. The Extracellular segment spans residues 156–173 (NTVQQASAGNFRQEPLHH). The chain crosses the membrane as a helical span at residues 174–194 (LATYLCLSLVVAELVLSCLVD). Over 195-300 (QPPFFSEDSQ…RSQRGPLLRA (106 aa)) the chain is Cytoplasmic. Residues 301–321 (IWRVFRSTFLLGTLSLVISDA) form a helical membrane-spanning segment. Positions 309–592 (FLLGTLSLVI…LPFSVHCIVQ (284 aa)) constitute an ABC transmembrane type-1 1 domain. The Extracellular segment spans residues 322–347 (FRFAVPKLLSLFLEFMGDRNSSAWTG). N-linked (GlcNAc...) asparagine glycosylation occurs at asparagine 341. A helical transmembrane segment spans residues 348 to 368 (WLLAVLMFAAACLQTLFEQQH). Residues 369–424 (MYRAKVLQMRLRTAITGLVYRKVLVLSSGSRKSSAAGDVVNLVSVDIQRLAESIIY) are Cytoplasmic-facing. Residues 425-445 (LNGLWLLFLWIFVCFVYLWQL) form a helical membrane-spanning segment. Over 446–448 (LGP) the chain is Extracellular. A helical membrane pass occupies residues 449–469 (SALTAVAVFLSLLPLNFFITK). Residues 470–531 (KRGFHQEEQM…ALKTSTLLFS (62 aa)) lie on the Cytoplasmic side of the membrane. Residues 532-552 (VSLVSFQVSTFLVALVVFAVH) form a helical membrane-spanning segment. Residues 553–574 (TLVAEDNAMDAEKAFVTLTVLS) are Extracellular-facing. A helical transmembrane segment spans residues 575 to 595 (ILNKAQAFLPFSVHCIVQARV). At 596-934 (SFDRLAAFLC…VKTTIYLSYL (339 aa)) the chain is on the cytoplasmic side. In terms of domain architecture, ABC transporter 1 spans 627–851 (ISVHNGTFAW…NGALVGLLDG (225 aa)). ATP is bound at residue 661–668 (GPVGAGKS). A disordered region spans residues 855–910 (PAGTHDAATSDDLGGFPGGGRPTCRPDRPRPTEAAPVKGRSTSEVQMEASLDDPEA). The chain crosses the membrane as a helical span at residues 935–955 (RAVGTPLCTYTLFLFLCQQVA). The region spanning 942–1223 (CTYTLFLFLC…VVRSWTDLEN (282 aa)) is the ABC transmembrane type-1 2 domain. Over 956-992 (SFSQGYWLSLWADDPVVDGRQMHAALRGWVFGLLGCL) the chain is Extracellular. Residues 993–1013 (QAIGLFASMAAVFLGGARASG) traverse the membrane as a helical segment. The Cytoplasmic segment spans residues 1014–1056 (LLFRSLLWDVARSPIGFFERTPVGNLLNRFSKETDTVDVDIPD). Residues 1057–1077 (KLRSLLTYAFGLLEVGLAVTM) traverse the membrane as a helical segment. Residue alanine 1078 is a topological domain, extracellular. Residues 1079–1099 (TPLAIVAILPLMVLYAGFQSL) traverse the membrane as a helical segment. Residues 1100–1170 (YVATSCQLRR…VADRWLATNL (71 aa)) lie on the Cytoplasmic side of the membrane. Residues 1171-1191 (ELLGNGLVFVAATCAVLSKAH) traverse the membrane as a helical segment. Over 1192–1193 (LS) the chain is Extracellular. Residues 1194–1214 (AGLVGFSVSAALQVTQTLQWV) traverse the membrane as a helical segment. Residues 1215–1498 (VRSWTDLENS…YRLAHESGLA (284 aa)) lie on the Cytoplasmic side of the membrane. The region spanning 1260 to 1494 (IEFRDFGLRH…KGLFYRLAHE (235 aa)) is the ABC transporter 2 domain. Phosphoserine is present on serine 1281. Position 1294 to 1301 (1294 to 1301 (GRTGAGKS)) interacts with ATP.

It belongs to the ABC transporter superfamily. ABCC family. Conjugate transporter (TC 3.A.1.208) subfamily. Glycosylated.

It localises to the basolateral cell membrane. It is found in the basal cell membrane. The catalysed reaction is an S-substituted glutathione(in) + ATP + H2O = an S-substituted glutathione(out) + ADP + phosphate + H(+). It carries out the reaction leukotriene C4(in) + ATP + H2O = leukotriene C4(out) + ADP + phosphate + H(+). Functionally, ATP-dependent transporter of the ATP-binding cassette (ABC) family that actively extrudes physiological compounds, and xenobiotics from cells. Mediates ATP-dependent transport of glutathione conjugates such as leukotriene-c4 (LTC4) and N-ethylmaleimide S-glutathione (NEM-GS) (in vitro), and an anionic cyclopentapeptide endothelin antagonist, BQ-123. May contribute to regulate the transport of organic compounds in testes across the blood-testis-barrier. Its function is as follows. Mediates the release of nucleoside triphosphates, predominantly ATP, into the circulation, where it is rapidly converted into AMP and the mineralization inhibitor inorganic pyrophosphate (PPi) by the ecto-enzyme ectonucleotide pyrophosphatase phosphodiesterase 1 (ENPP1), therefore playing a role in PPi homeostasis. In Mus musculus (Mouse), this protein is ATP-binding cassette sub-family C member 6 (Abcc6).